A 186-amino-acid chain; its full sequence is Probable nicotinate-nucleotide adenylyltransferase (186 aa).

This sequence belongs to the NadD family.

It carries out the reaction nicotinate beta-D-ribonucleotide + ATP + H(+) = deamido-NAD(+) + diphosphate. It functions in the pathway cofactor biosynthesis; NAD(+) biosynthesis; deamido-NAD(+) from nicotinate D-ribonucleotide: step 1/1. Functionally, catalyzes the reversible adenylation of nicotinate mononucleotide (NaMN) to nicotinic acid adenine dinucleotide (NaAD). This Tropheryma whipplei (strain Twist) (Whipple's bacillus) protein is Probable nicotinate-nucleotide adenylyltransferase.